A 486-amino-acid polypeptide reads, in one-letter code: Cardiolipin synthase A (486 aa).

2 helical membrane passes run 3–23 (IFYDLIKWLVVLIYWLLIANI) and 38–58 (MSWLLTIYIIPFIGIAIWFFF). 2 consecutive PLD phosphodiesterase domains span residues 219–246 (LDVRQHRKIILIDNYISYSGSMNLVDPY) and 399–426 (KKGLLHSKSILIDQQLSLIGTVNLDMRS). Catalysis depends on residues His-224, Lys-226, Asp-231, His-404, Lys-406, and Asp-411.

This sequence belongs to the phospholipase D family. Cardiolipin synthase subfamily. ClsA sub-subfamily.

The protein localises to the cell inner membrane. The catalysed reaction is 2 a 1,2-diacyl-sn-glycero-3-phospho-(1'-sn-glycerol) = a cardiolipin + glycerol. Functionally, catalyzes the reversible phosphatidyl group transfer from one phosphatidylglycerol molecule to another to form cardiolipin (CL) (diphosphatidylglycerol) and glycerol. This chain is Cardiolipin synthase A, found in Buchnera aphidicola subsp. Schizaphis graminum (strain Sg).